A 288-amino-acid chain; its full sequence is Energy-coupling factor transporter ATP-binding protein EcfA2 (288 aa).

Positions 3–245 (IKIENLTHVY…VDTLESVGLA (243 aa)) constitute an ABC transporter domain. 40–47 (GHTGSGKS) lines the ATP pocket.

It belongs to the ABC transporter superfamily. Energy-coupling factor EcfA family. As to quaternary structure, forms a stable energy-coupling factor (ECF) transporter complex composed of 2 membrane-embedded substrate-binding proteins (S component), 2 ATP-binding proteins (A component) and 2 transmembrane proteins (T component).

It localises to the cell membrane. Its function is as follows. ATP-binding (A) component of a common energy-coupling factor (ECF) ABC-transporter complex. Unlike classic ABC transporters this ECF transporter provides the energy necessary to transport a number of different substrates. In Clostridium tetani (strain Massachusetts / E88), this protein is Energy-coupling factor transporter ATP-binding protein EcfA2.